Reading from the N-terminus, the 173-residue chain is RNA pyrophosphohydrolase (173 aa).

The region spanning 11 to 164 (PYRKCVGILV…KKHVYTQVVK (154 aa)) is the Nudix hydrolase domain. Positions 52–73 (GGINQGEKPIDAARRELYEETG) match the Nudix box motif.

It belongs to the Nudix hydrolase family. RppH subfamily. A divalent metal cation serves as cofactor.

Functionally, accelerates the degradation of transcripts by removing pyrophosphate from the 5'-end of triphosphorylated RNA, leading to a more labile monophosphorylated state that can stimulate subsequent ribonuclease cleavage. This is RNA pyrophosphohydrolase from Bartonella clarridgeiae.